We begin with the raw amino-acid sequence, 164 residues long: CASP-like protein 1C2 (164 aa).

At 1–8 (MVKLTQRL) the chain is on the cytoplasmic side. A helical transmembrane segment spans residues 9–29 (GGLVLRFAAFCAALGAVIAMI). Over 30 to 51 (TSRERSSFFVISLVAKYSDLAA) the chain is Extracellular. Residues 52–72 (FKYFVIANAIVTVYSFLVLFL) traverse the membrane as a helical segment. At 73-80 (PKESLLWK) the chain is on the cytoplasmic side. A helical transmembrane segment spans residues 81 to 101 (FVVVLDLMVTMLLTSSLSAAV). The Extracellular portion of the chain corresponds to 102–129 (AVAQVGKRGNANAGWLPICGQVPRFCDQ). Residues 130-150 (ITGALIAGLVALVLYVFLLIF) form a helical membrane-spanning segment. The Cytoplasmic segment spans residues 151-164 (SIHHVVDPFLLRKS).

The protein belongs to the Casparian strip membrane proteins (CASP) family. As to quaternary structure, homodimer and heterodimers.

The protein resides in the cell membrane. This is CASP-like protein 1C2 from Arabidopsis thaliana (Mouse-ear cress).